We begin with the raw amino-acid sequence, 81 residues long: Large ribosomal subunit protein bL31B (81 aa).

The protein belongs to the bacterial ribosomal protein bL31 family. Type B subfamily. In terms of assembly, part of the 50S ribosomal subunit.

This chain is Large ribosomal subunit protein bL31B, found in Lactobacillus acidophilus (strain ATCC 700396 / NCK56 / N2 / NCFM).